An 86-amino-acid polypeptide reads, in one-letter code: Photosystem I reaction center subunit PsaK (86 aa).

2 consecutive transmembrane segments (helical) span residues 14–34 (LQWS…AIAF) and 57–77 (FGLP…VGAV).

It belongs to the PsaG/PsaK family.

It localises to the cellular thylakoid membrane. The polypeptide is Photosystem I reaction center subunit PsaK (Nostoc punctiforme (strain ATCC 29133 / PCC 73102)).